The sequence spans 315 residues: 4-hydroxy-3-methylbut-2-enyl diphosphate reductase (315 aa).

Residue C18 participates in [4Fe-4S] cluster binding. The (2E)-4-hydroxy-3-methylbut-2-enyl diphosphate site is built by H47 and H80. Dimethylallyl diphosphate-binding residues include H47 and H80. The isopentenyl diphosphate site is built by H47 and H80. C102 serves as a coordination point for [4Fe-4S] cluster. Residue H130 coordinates (2E)-4-hydroxy-3-methylbut-2-enyl diphosphate. Position 130 (H130) interacts with dimethylallyl diphosphate. H130 serves as a coordination point for isopentenyl diphosphate. E132 acts as the Proton donor in catalysis. Position 171 (T171) interacts with (2E)-4-hydroxy-3-methylbut-2-enyl diphosphate. C201 lines the [4Fe-4S] cluster pocket. Residues S229, S230, N231, and S274 each coordinate (2E)-4-hydroxy-3-methylbut-2-enyl diphosphate. 4 residues coordinate dimethylallyl diphosphate: S229, S230, N231, and S274. Isopentenyl diphosphate-binding residues include S229, S230, N231, and S274.

Belongs to the IspH family. [4Fe-4S] cluster serves as cofactor.

It carries out the reaction isopentenyl diphosphate + 2 oxidized [2Fe-2S]-[ferredoxin] + H2O = (2E)-4-hydroxy-3-methylbut-2-enyl diphosphate + 2 reduced [2Fe-2S]-[ferredoxin] + 2 H(+). It catalyses the reaction dimethylallyl diphosphate + 2 oxidized [2Fe-2S]-[ferredoxin] + H2O = (2E)-4-hydroxy-3-methylbut-2-enyl diphosphate + 2 reduced [2Fe-2S]-[ferredoxin] + 2 H(+). The protein operates within isoprenoid biosynthesis; dimethylallyl diphosphate biosynthesis; dimethylallyl diphosphate from (2E)-4-hydroxy-3-methylbutenyl diphosphate: step 1/1. It participates in isoprenoid biosynthesis; isopentenyl diphosphate biosynthesis via DXP pathway; isopentenyl diphosphate from 1-deoxy-D-xylulose 5-phosphate: step 6/6. Catalyzes the conversion of 1-hydroxy-2-methyl-2-(E)-butenyl 4-diphosphate (HMBPP) into a mixture of isopentenyl diphosphate (IPP) and dimethylallyl diphosphate (DMAPP). Acts in the terminal step of the DOXP/MEP pathway for isoprenoid precursor biosynthesis. The chain is 4-hydroxy-3-methylbut-2-enyl diphosphate reductase from Hyphomonas neptunium (strain ATCC 15444).